The primary structure comprises 409 residues: Dipeptidase 1 (409 aa).

A signal peptide spans 1 to 16 (MWTSWWLWPLVAVCAA). His36 and Asp38 together coordinate Zn(2+). The N-linked (GlcNAc...) asparagine glycan is linked to Asn57. Cysteines 87 and 170 form a disulfide. Glu141 contributes to the Zn(2+) binding site. His168 is a binding site for substrate. The Zn(2+) site is built by His214 and His235. Cysteines 242 and 274 form a disulfide. Arg246 provides a ligand contact to substrate. N-linked (GlcNAc...) asparagine glycosylation occurs at Asn279. Residue Asp304 coordinates substrate. Residue Ser384 is the site of GPI-anchor amidated serine attachment. A propeptide spans 385-409 (AAPSLHLPPGSLLASLVPLLLLSLP) (removed in mature form).

This sequence belongs to the metallo-dependent hydrolases superfamily. Peptidase M19 family. Homodimer; disulfide-linked. It depends on Zn(2+) as a cofactor.

It localises to the apical cell membrane. It is found in the cell projection. Its subcellular location is the microvillus membrane. The protein resides in the cell membrane. It carries out the reaction an L-aminoacyl-L-amino acid + H2O = 2 an L-alpha-amino acid. The enzyme catalyses leukotriene D4 + H2O = leukotriene E4 + glycine. The catalysed reaction is L-cystine-bis-glycine + 2 H2O = L-cystine + 2 glycine. It catalyses the reaction a beta-lactam + H2O = a substituted beta-amino acid. It carries out the reaction glycyldehydrophenylalanine + H2O = 2,3-didehydrophenylalanine + glycine. With respect to regulation, inhibited by L-penicillamine. Inhibited by cilastatin. Functionally, hydrolyzes a wide range of dipeptides. Hydrolyzes the conversion of leukotriene D4 to leukotriene E4. Hydrolyzes cystinyl-bis-glycine (cys-bis-gly) formed during glutathione degradation. Also possesses beta lactamase activity and hydrolytically inactivates beta-lactam antibiotics. Independently of its dipeptidase activity, acts as an adhesion receptor for neutrophil recruitment from bloodstream into inflamed lungs and liver. The sequence is that of Dipeptidase 1 (DPEP1) from Sus scrofa (Pig).